A 505-amino-acid chain; its full sequence is Dolichyl pyrophosphate Glc1Man9GlcNAc2 alpha-1,3-glucosyltransferase (505 aa).

The Lumenal portion of the chain corresponds to 1-3 (MAE). The helical transmembrane segment at 4-24 (IYPSLVQCAIVATAFKVLLFP) threads the bilayer. Residues 25 to 101 (AYKSTDFEVH…DSWQTVYFQR (77 aa)) are Cytoplasmic-facing. The helical transmembrane segment at 102–122 (WTVIVTELVLLYALQMFVDST) threads the bilayer. The Lumenal segment spans residues 123–128 (PGVSKR). Residues 129-149 (AAHAAAVSILLSPGLLIIDHI) traverse the membrane as a helical segment. The Cytoplasmic segment spans residues 150–152 (HFQ). Residues 153–169 (YNGVMYGILIASLVLAK) traverse the membrane as a helical segment. The Lumenal segment spans residues 170–173 (KKSS). A helical transmembrane segment spans residues 174-194 (LLASGLVFAALLCMKHIYLYL). Over 195-224 (APAYFVYLLRVYCLPPKLSPRSIFRIQFFN) the chain is Cytoplasmic. The chain crosses the membrane as a helical span at residues 225–245 (CVKLGGGIAAIFAAAFGPFAL). Residues 246–319 (KNQIPQIFSR…TSFAVLPDIT (74 aa)) are Lumenal-facing. A helical transmembrane segment spans residues 320–340 (PRMCFVLTLLFQAIPLIKLFM). Over 341–359 (RPTWEGFIGGVTLCGYASF) the chain is Cytoplasmic. The helical transmembrane segment at 360 to 380 (LFGWHVHEKAILLVIIPFSLI) threads the bilayer. The Lumenal segment spans residues 381–386 (ALKDRR). Residues 387 to 407 (YLGAFRPLAVAGHVSLFPLIF) traverse the membrane as a helical segment. Residues 408 to 409 (TP) lie on the Cytoplasmic side of the membrane. Residues 410–430 (AEFPIKTVYTIFWLVLFLMAF) traverse the membrane as a helical segment. At 431–450 (DRLAPAPTRQRLFLFDRFST) the chain is on the lumenal side. The chain crosses the membrane as a helical span at residues 451 to 471 (AYITVSIPLIFYCSLMHGIIF). Over 472-480 (GKSYEFLPL) the chain is Cytoplasmic. A helical membrane pass occupies residues 481–501 (MFTSSYSAIGVVGSWLGFMVV). The Lumenal segment spans residues 502–505 (YFTE).

Belongs to the ALG6/ALG8 glucosyltransferase family.

Its subcellular location is the endoplasmic reticulum membrane. The catalysed reaction is an alpha-D-Glc-(1-&gt;3)-alpha-D-Man-(1-&gt;2)-alpha-D-Man-(1-&gt;2)-alpha-D-Man-(1-&gt;3)-[alpha-D-Man-(1-&gt;2)-alpha-D-Man-(1-&gt;3)-[alpha-D-Man-(1-&gt;2)-alpha-D-Man-(1-&gt;6)]-alpha-D-Man-(1-&gt;6)]-beta-D-Man-(1-&gt;4)-beta-D-GlcNAc-(1-&gt;4)-alpha-D-GlcNAc-diphospho-di-trans,poly-cis-dolichol + a di-trans,poly-cis-dolichyl beta-D-glucosyl phosphate = an alpha-D-Glc-(1-&gt;3)-alpha-D-Glc-(1-&gt;3)-alpha-D-Man-(1-&gt;2)-alpha-D-Man-(1-&gt;2)-alpha-D-Man-(1-&gt;3)-[alpha-D-Man-(1-&gt;2)-alpha-D-Man-(1-&gt;3)-[alpha-D-Man-(1-&gt;2)-alpha-D-Man-(1-&gt;6)]-alpha-D-Man-(1-&gt;6)]-beta-D-Man-(1-&gt;4)-beta-D-GlcNAc-(1-&gt;4)-alpha-D-GlcNAc-diphospho-di-trans,poly-cis-dolichol + a di-trans,poly-cis-dolichyl phosphate + H(+). Its pathway is protein modification; protein glycosylation. Its function is as follows. Dolichyl pyrophosphate Glc1Man9GlcNAc2 alpha-1,3-glucosyltransferase that operates in the biosynthetic pathway of dolichol-linked oligosaccharides, the glycan precursors employed in protein asparagine (N)-glycosylation. The assembly of dolichol-linked oligosaccharides begins on the cytosolic side of the endoplasmic reticulum membrane and finishes in its lumen. The sequential addition of sugars to dolichol pyrophosphate produces dolichol-linked oligosaccharides containing fourteen sugars, including two GlcNAcs, nine mannoses and three glucoses. Once assembled, the oligosaccharide is transferred from the lipid to nascent proteins by oligosaccharyltransferases. In the lumen of the endoplasmic reticulum, adds the second glucose residue from dolichyl phosphate glucose (Dol-P-Glc) onto the lipid-linked oligosaccharide intermediate Glc(1)Man(9)GlcNAc(2)-PP-Dol to produce Glc(2)Man(9)GlcNAc(2)-PP-Dol. This is Dolichyl pyrophosphate Glc1Man9GlcNAc2 alpha-1,3-glucosyltransferase (alg-8) from Neurospora crassa (strain ATCC 24698 / 74-OR23-1A / CBS 708.71 / DSM 1257 / FGSC 987).